Here is a 196-residue protein sequence, read N- to C-terminus: UPF0319 protein VV1_0237 (196 aa).

The signal sequence occupies residues 1 to 19 (MKKMMILSALALFSSSLFA).

This sequence belongs to the UPF0319 family.

This is UPF0319 protein VV1_0237 from Vibrio vulnificus (strain CMCP6).